The following is a 212-amino-acid chain: Large ribosomal subunit protein uL3 (212 aa).

The residue at position 152 (Gln-152) is an N5-methylglutamine.

This sequence belongs to the universal ribosomal protein uL3 family. As to quaternary structure, part of the 50S ribosomal subunit. Forms a cluster with proteins L14 and L19. Methylated by PrmB.

In terms of biological role, one of the primary rRNA binding proteins, it binds directly near the 3'-end of the 23S rRNA, where it nucleates assembly of the 50S subunit. The chain is Large ribosomal subunit protein uL3 from Marinomonas sp. (strain MWYL1).